The following is a 122-amino-acid chain: Large ribosomal subunit protein uL14 (122 aa).

Belongs to the universal ribosomal protein uL14 family. Part of the 50S ribosomal subunit. Forms a cluster with proteins L3 and L19. In the 70S ribosome, L14 and L19 interact and together make contacts with the 16S rRNA in bridges B5 and B8.

Binds to 23S rRNA. Forms part of two intersubunit bridges in the 70S ribosome. This is Large ribosomal subunit protein uL14 from Bifidobacterium adolescentis (strain ATCC 15703 / DSM 20083 / NCTC 11814 / E194a).